A 611-amino-acid chain; its full sequence is Acetylcholinesterase (611 aa).

Positions 1–31 (MRPPWCPLYTPSLAAPILLLLLFLLGGGAEA) are cleaved as a signal peptide. Cys97 and Cys124 form a disulfide bridge. Ser231 functions as the Acyl-ester intermediate in the catalytic mechanism. A disulfide bond links Cys285 and Cys300. N-linked (GlcNAc...) asparagine glycosylation occurs at Asn293. Catalysis depends on Glu362, which acts as the Charge relay system. A glycan (N-linked (GlcNAc...) asparagine) is linked at Asn378. A disulfide bridge connects residues Cys437 and Cys557. The Charge relay system role is filled by His475. Asn492 carries an N-linked (GlcNAc...) asparagine glycan.

Belongs to the type-B carboxylesterase/lipase family. Interacts with PRIMA1. The interaction with PRIMA1 is required to anchor it to the basal lamina of cells and organize into tetramers. Isoform H generates GPI-anchored dimers; disulfide linked. Isoform T generates multiple structures, ranging from monomers and dimers to collagen-tailed and hydrophobic-tailed forms, in which catalytic tetramers are associated with anchoring proteins that attach them to the basal lamina or to cell membranes. In the collagen-tailed forms, isoform T subunits are associated with a specific collagen, COLQ, which triggers the formation of isoform T tetramers, from monomers and dimers.

The protein resides in the synapse. Its subcellular location is the secreted. It is found in the cell membrane. The catalysed reaction is acetylcholine + H2O = choline + acetate + H(+). Its function is as follows. Terminates signal transduction at the neuromuscular junction by rapid hydrolysis of the acetylcholine released into the synaptic cleft. The protein is Acetylcholinesterase (ACHE) of Felis catus (Cat).